The chain runs to 331 residues: MTTPDAFRDAEYIADVSGISYGNVANLTEQDANVVPRENERMRKLQLAAKVAFIDRLLRDLDILIYCELSALYYMDCSVILFAIRAIVQLIFFTPKAPPFDPTRNQPFIGAIFVSNIFCMIFHNFFTHPEASEATRGYLHGGLLIDFIGQKAPISLFRLFLLDFLVLILDLVMLGLIVERVKTTGQTSTTSTEILRVQDHDSEERGVHRTRPESRSSVVGAELDETDGHITRANAGVGEQAEHTQLLADPSEDGHTPGAKNSHPLDAFSSGEAVIMNLGLFDVIRDQWKYSTTAPPARTSSYIPSDQTAAFLRARFGLQVGPDGRVQRIES.

A glycan (N-linked (GlcNAc...) asparagine) is linked at N26. The next 3 helical transmembrane spans lie at 63–83 (ILIY…ILFA), 107–127 (PFIG…NFFT), and 159–179 (LFLL…LIVE). A disordered region spans residues 188–225 (STTSTEILRVQDHDSEERGVHRTRPESRSSVVGAELDE). Residues 196-214 (RVQDHDSEERGVHRTRPES) show a composition bias toward basic and acidic residues.

As to quaternary structure, component of the DSC E3 ubiquitin ligase complex composed of dscA, dscB, dscC and dscD.

It is found in the endoplasmic reticulum membrane. It functions in the pathway protein modification; protein ubiquitination. In terms of biological role, component of the DSC E3 ubiquitin ligase complex which is required for the srbA transcriptional activator proteolytic cleavage to release the soluble transcription factor from the membrane in low oxygen or sterol conditions. Required for growth during hypoxia and triazole drug susceptibility, as well as for virulence in a murine model of invasive pulmonary aspergillosis (IPA). The protein is DSC E3 ubiquitin ligase complex subunit D of Aspergillus fumigatus (strain ATCC MYA-4609 / CBS 101355 / FGSC A1100 / Af293) (Neosartorya fumigata).